The primary structure comprises 454 residues: tRNA modification GTPase MnmE (454 aa).

(6S)-5-formyl-5,6,7,8-tetrahydrofolate-binding residues include arginine 23, glutamate 80, and lysine 120. Residues glycine 216 to glycine 377 enclose the TrmE-type G domain. Residue asparagine 226 participates in K(+) binding. Residues asparagine 226–serine 231, threonine 245–threonine 251, aspartate 270–glycine 273, asparagine 335–aspartate 338, and serine 358–arginine 360 each bind GTP. Serine 230 is a binding site for Mg(2+). K(+) contacts are provided by threonine 245, isoleucine 247, and threonine 250. Mg(2+) is bound at residue threonine 251. Lysine 454 serves as a coordination point for (6S)-5-formyl-5,6,7,8-tetrahydrofolate.

The protein belongs to the TRAFAC class TrmE-Era-EngA-EngB-Septin-like GTPase superfamily. TrmE GTPase family. As to quaternary structure, homodimer. Heterotetramer of two MnmE and two MnmG subunits. It depends on K(+) as a cofactor.

Its subcellular location is the cytoplasm. Functionally, exhibits a very high intrinsic GTPase hydrolysis rate. Involved in the addition of a carboxymethylaminomethyl (cmnm) group at the wobble position (U34) of certain tRNAs, forming tRNA-cmnm(5)s(2)U34. The sequence is that of tRNA modification GTPase MnmE from Yersinia enterocolitica serotype O:8 / biotype 1B (strain NCTC 13174 / 8081).